The chain runs to 1513 residues: Lid2 complex component lid2 (1513 aa).

The region spanning 56 to 97 is the JmjN domain; sequence GLSVQLNASNMTDPFKFLLDNWHTIFKNGAIKLLPPEGWQIP. An ARID domain is found at 121-212; that stretch reads YEKNYDYFKK…YIKPFERDSS (92 aa). The disordered stretch occupies residues 211-253; that stretch reads SSPSFKSKRSESSTRKIRNTRSSAQQESPIPETSAQSPVQTIQ. Over residues 230–253 the composition is skewed to polar residues; it reads TRSSAQQESPIPETSAQSPVQTIQ. The PHD-type 1 zinc finger occupies 268-318; that stretch reads GEQCEYCGLDKNPETILLCDGCEAAYHTSCLDPPLTSIPKEDWYCDACKFN. Positions 408 to 574 constitute a JmjC domain; sequence KYSSEPWNLH…DGLLNSSISV (167 aa). Phosphoserine is present on Ser722. The interval 1063-1086 is disordered; sequence LSLNDRPGPPMEPASRETSPDSEG. Positions 1076–1086 are enriched in basic and acidic residues; the sequence is ASRETSPDSEG. The PHD-type 2 zinc finger occupies 1093-1145; sequence KKGCIFCFCRLPESGVMIECEICHEWYHAKCLKMSKKKLRQDEKFTCPICDYR. Residues 1096-1143 form an RING-type 1; degenerate zinc finger; that stretch reads CIFCFCRLPESGVMIECEICHEWYHAKCLKMSKKKLRQDEKFTCPICD. 2 disordered regions span residues 1244-1268 and 1280-1327; these read APNP…RQRQ and ASAI…NNKN. Residues 1257 to 1268 are compositionally biased toward basic residues; that stretch reads TRKPRPTKRQRQ. The segment covering 1301-1313 has biased composition (basic and acidic residues); the sequence is VEAETKSKSEKSP. The span at 1316–1326 shows a compositional bias: polar residues; it reads NGTNISDANNK. The segment at 1352-1403 adopts a PHD-type 3 zinc-finger fold; that stretch reads NSSCLCGEEFSPRDSFIDCTICERRFHYDCVGLNNEIADSVSKFTCPICMEQ. The RING-type 2; degenerate zinc finger occupies 1354–1401; that stretch reads SCLCGEEFSPRDSFIDCTICERRFHYDCVGLNNEIADSVSKFTCPICM.

As to quaternary structure, component of the Lid2 complex composed of ash2, jmj3, lid2, sdc1 and snt2.

It localises to the nucleus. This chain is Lid2 complex component lid2 (lid2), found in Schizosaccharomyces pombe (strain 972 / ATCC 24843) (Fission yeast).